The chain runs to 757 residues: MDVNPTLLFLKVPAQNAISTTFPYTGDPPYSHGTGTGYTMDTVNRTHQYSERGRWTTNTETGAPQLNPIDGPLPEDNEPSGYAQTDCVLEAMAFLEESHPGIFENSCIETMEVVQQTRVDKLTQGRQTYDWTLNRNQPAATALANTIEVFRSNGLTANESGRLIDFLKDVMESMNKEEMEITTHFQRKRRVRDNMTKKMVTQRTIGKRKQKLNKRSYLIRALTLNTMTKDAERGKLKRRAIATPGMQIRGFVYFVETLARSICEKLEQSGLPVGGNEKKAKLANVVRKMMTNSQDTELSFTITGDNTKWNENQNPRMFLAMITYMTRNQPEWFRNVLSIAPIMFSNKMARLGKGYMFESKSMKLRTQIPAEMLASIDLKYFNGSTRKKIEKIRPLLIEGTASLSPGMMMGMFNMLSTVLGVSILNLGQKRYTKTTYWWDGLQSSDDFALIVNAPNHEGIQAGVDRFYRTCKLLGINMSKKKSYINRTGTFEFTSFFYRYGFVANFSMELPSFGVSGINESADMSIGVTVIKNNMINNDLGPATAQMALQLFIKDYRYTYRCHRGDTQIQTRRSFEIKKLWEQTRSKAGLLVSDGGPNLYNIRNLHIPEVCLKWELMDEDYQGRLCNPLNPFVSHKEIESMNNAVMMPAHGPAKNMEYDAVATTHSWIPKRNRSILNTSQRGILEDEQMYQRCCNLFEXFFPSSSYRRPVGISSMVEAMVSRAQIDARIDFESGRIKKEEFTEIMKICSTIEELRRQK.

A disordered region spans residues 53-82; it reads GRWTTNTETGAPQLNPIDGPLPEDNEPSGY. Positions 55-64 are enriched in polar residues; the sequence is WTTNTETGAP. Short sequence motifs (nuclear localization signal) lie at residues 187 to 195 and 203 to 216; these read RKRRVRDNM and RTIG…NKRS. A promoter-binding site region spans residues 249–256; the sequence is RGFVYFVE. The 198-residue stretch at 286–483 folds into the RdRp catalytic domain; sequence VRKMMTNSQD…GINMSKKKSY (198 aa).

Belongs to the influenza viruses polymerase PB1 family. In terms of assembly, influenza RNA polymerase is composed of three subunits: PB1, PB2 and PA. Interacts (via N-terminus) with PA (via C-terminus). Interacts (via C-terminus) with PB2 (via N-terminus); this interaction is essential for transcription initiation. Interacts (via C-terminus) with human PKP2 (via N-terminus); the interaction competitively inhibits the interaction between the RNA polymerase subunits PB1 and PB2. In terms of processing, phosphorylated by host PRKCA.

The protein localises to the host nucleus. It localises to the host cytoplasm. It catalyses the reaction RNA(n) + a ribonucleoside 5'-triphosphate = RNA(n+1) + diphosphate. RNA-dependent RNA polymerase which is responsible for replication and transcription of virus RNA segments. The transcription of viral mRNAs occurs by a unique mechanism called cap-snatching. 5' methylated caps of cellular mRNAs are cleaved after 10-13 nucleotides by PA. In turn, these short capped RNAs are used as primers by PB1 for transcription of viral mRNAs. During virus replication, PB1 initiates RNA synthesis and copy vRNA into complementary RNA (cRNA) which in turn serves as a template for the production of more vRNAs. The sequence is that of RNA-directed RNA polymerase catalytic subunit from Influenza A virus (strain A/USA:Phila/1935 H1N1).